Here is a 99-residue protein sequence, read N- to C-terminus: Glycine-rich protein (99 aa).

A signal peptide spans 1-18; it reads MKSMIAVLLLALVATSMA.

The protein belongs to the non-disulfide-bridged peptide (NDBP) superfamily. In terms of tissue distribution, expressed by the venom gland.

The protein resides in the secreted. In Lychas mucronatus (Chinese swimming scorpion), this protein is Glycine-rich protein.